The sequence spans 711 residues: Polyribonucleotide nucleotidyltransferase (711 aa).

Mg(2+) is bound by residues D486 and D492. Positions 553-612 constitute a KH domain; sequence PRIHTIKISPDKIKDVIGKGGSVIRALTEETGTTIEIEDDGTVKIAATDGEKAKFAIRRI. Residues 622 to 690 enclose the S1 motif domain; it reads GRIYNGKVTR…RQGRVRLSIK (69 aa). The disordered stretch occupies residues 690–711; it reads KEATEQTQPAAAPEAPAAEQGE. A compositionally biased stretch (low complexity) spans 694–711; sequence EQTQPAAAPEAPAAEQGE.

This sequence belongs to the polyribonucleotide nucleotidyltransferase family. As to quaternary structure, component of the RNA degradosome, which is a multiprotein complex involved in RNA processing and mRNA degradation. It depends on Mg(2+) as a cofactor.

Its subcellular location is the cytoplasm. The enzyme catalyses RNA(n+1) + phosphate = RNA(n) + a ribonucleoside 5'-diphosphate. In terms of biological role, involved in mRNA degradation. Catalyzes the phosphorolysis of single-stranded polyribonucleotides processively in the 3'- to 5'-direction. In Enterobacter sp. (strain 638), this protein is Polyribonucleotide nucleotidyltransferase.